A 491-amino-acid polypeptide reads, in one-letter code: Protein translocase subunit SecY (491 aa).

Topologically, residues 1-20 (MGWKEAAAPVLTRMPAVERP) are cytoplasmic. The chain crosses the membrane as a helical span at residues 21–47 (EGHVPFRRKMYWTGGVLVLYFFLTNVP). Residues 48 to 58 (LWGIQTAGNDF) lie on the Extracellular side of the membrane. The helical intramembrane region spans 59 to 66 (FGQFRSLL). The discontinuously helical transmembrane segment at 59 to 87 (FGQFRSLLAGGQGTVLQLGIGPIVTASIV) threads the bilayer. An intramembrane segment occupies 67–78 (AGGQGTVLQLGI). The segment at residues 79-87 (GPIVTASIV) is an intramembrane region (helical). The Cytoplasmic portion of the chain corresponds to 88 to 109 (LQLLGGANLLGLDTDNDPRDQA). A helical transmembrane segment spans residues 110-134 (IYQGLQKFLVGVMVVLTGAPMVFLG). The Extracellular portion of the chain corresponds to 135–152 (NFLQPSQQLAQSMPGGAF). The helical transmembrane segment at 153–177 (GVEVLIFAQIAAGGILLLFMDEVIS) threads the bilayer. Topologically, residues 178–183 (KWGVGS) are cytoplasmic. Residues 184–202 (GIGLFIVAGVSQSLVGGLV) traverse the membrane as a helical segment. Residues 203-244 (FWEGGVGSQGLLPTWFDIIVGNVSNMPPLLSGSGIEFLLMQA) lie on the Extracellular side of the membrane. Residues 245–266 (GILGLLTTLFIYVVVVYAESVR) traverse the membrane as a helical segment. Over 267–291 (VEIPLSHARVKGARGRFPVKLIYAS) the chain is Cytoplasmic. A helical transmembrane segment spans residues 292 to 313 (VLPMILVRALQANIQFLGQILN). Residues 314 to 365 (STLASMPTWLGVYGGNGQVTGGLFYYLAPIYSPNAWMWWTSGATAARWQVLI) lie on the Extracellular side of the membrane. Residues 366 to 385 (RIAIDLSFMIIGGAIFAIFW) traverse the membrane as a helical segment. Residues 386 to 428 (VETADMGPDATARQIQNSGMQIPGFRKNQGVIEKVMERYIPQV) lie on the Cytoplasmic side of the membrane. Residues 429–447 (TVIGGALVGLLAVMANMLG) traverse the membrane as a helical segment. Residues 448–452 (TIGNV) lie on the Extracellular side of the membrane. A helical membrane pass occupies residues 453 to 467 (SGTGLLLTISITYKL). Over 468 to 491 (YEEIAEEQMMEMHPMMREMFGGGD) the chain is Cytoplasmic.

This sequence belongs to the SecY/SEC61-alpha family. Component of the Sec protein translocase complex. Heterotrimer consisting of alpha (SecY), beta (SecG) and gamma (SecE) subunits. The heterotrimers can form oligomers, although 1 heterotrimer is thought to be able to translocate proteins. Interacts with the ribosome. May interact with SecDF, and other proteins may be involved.

It is found in the cell membrane. Its function is as follows. The central subunit of the protein translocation channel SecYEG. Consists of two halves formed by TMs 1-5 and 6-10. These two domains form a lateral gate at the front which open onto the bilayer between TMs 2 and 7, and are clamped together by SecE at the back. The channel is closed by both a pore ring composed of hydrophobic SecY resides and a short helix (helix 2A) on the extracellular side of the membrane which forms a plug. The plug probably moves laterally to allow the channel to open. The ring and the pore may move independently. This is Protein translocase subunit SecY from Halobacterium salinarum (strain ATCC 700922 / JCM 11081 / NRC-1) (Halobacterium halobium).